The sequence spans 261 residues: Small ribosomal subunit protein eS1 (261 aa).

Basic residues predominate over residues 1–18 (MAVGKNKRISKGKKGGKK). The tract at residues 1–23 (MAVGKNKRISKGKKGGKKKAADP) is disordered.

The protein belongs to the eukaryotic ribosomal protein eS1 family. As to quaternary structure, component of the small ribosomal subunit. Mature ribosomes consist of a small (40S) and a large (60S) subunit. The 40S subunit contains about 33 different proteins and 1 molecule of RNA (18S). The 60S subunit contains about 49 different proteins and 3 molecules of RNA (25S, 5.8S and 5S).

The protein localises to the cytoplasm. In Nicotiana tabacum (Common tobacco), this protein is Small ribosomal subunit protein eS1 (cyc07).